The sequence spans 182 residues: Isopentenyl-diphosphate Delta-isomerase (182 aa).

Mn(2+) contacts are provided by His-25 and His-32. Residues 30–164 (RLHLAFSSWL…PWAFSPWMVM (135 aa)) form the Nudix hydrolase domain. Cys-67 is an active-site residue. His-69 contacts Mn(2+). Glu-87 serves as a coordination point for Mg(2+). The Mn(2+) site is built by Glu-114 and Glu-116. Glu-116 is an active-site residue.

The protein belongs to the IPP isomerase type 1 family. Homodimer. Mg(2+) is required as a cofactor. Requires Mn(2+) as cofactor.

The protein localises to the cytoplasm. It catalyses the reaction isopentenyl diphosphate = dimethylallyl diphosphate. The protein operates within isoprenoid biosynthesis; dimethylallyl diphosphate biosynthesis; dimethylallyl diphosphate from isopentenyl diphosphate: step 1/1. Functionally, catalyzes the 1,3-allylic rearrangement of the homoallylic substrate isopentenyl (IPP) to its highly electrophilic allylic isomer, dimethylallyl diphosphate (DMAPP). This Escherichia coli O139:H28 (strain E24377A / ETEC) protein is Isopentenyl-diphosphate Delta-isomerase.